Reading from the N-terminus, the 250-residue chain is Sugar fermentation stimulation protein homolog (250 aa).

This sequence belongs to the SfsA family.

The protein is Sugar fermentation stimulation protein homolog of Synechococcus sp. (strain CC9311).